We begin with the raw amino-acid sequence, 284 residues long: UPF0294 protein VV2535 (284 aa).

The protein belongs to the UPF0294 family.

It localises to the cytoplasm. In Vibrio vulnificus (strain YJ016), this protein is UPF0294 protein VV2535.